Reading from the N-terminus, the 305-residue chain is tRNA-cytidine(32) 2-sulfurtransferase (305 aa).

The segment at 1–20 (MTAVLPLPHPLADPAPRDPR) is disordered. The PP-loop motif signature appears at 59-64 (SGGKDS). Cysteine 134, cysteine 137, and cysteine 225 together coordinate [4Fe-4S] cluster. Over residues 282–293 (DAPPDLAPDPGA) the composition is skewed to low complexity. A disordered region spans residues 282–305 (DAPPDLAPDPGAWLTASDATHDSD).

It belongs to the TtcA family. In terms of assembly, homodimer. Mg(2+) is required as a cofactor. It depends on [4Fe-4S] cluster as a cofactor.

The protein localises to the cytoplasm. It catalyses the reaction cytidine(32) in tRNA + S-sulfanyl-L-cysteinyl-[cysteine desulfurase] + AH2 + ATP = 2-thiocytidine(32) in tRNA + L-cysteinyl-[cysteine desulfurase] + A + AMP + diphosphate + H(+). It functions in the pathway tRNA modification. In terms of biological role, catalyzes the ATP-dependent 2-thiolation of cytidine in position 32 of tRNA, to form 2-thiocytidine (s(2)C32). The sulfur atoms are provided by the cysteine/cysteine desulfurase (IscS) system. The polypeptide is tRNA-cytidine(32) 2-sulfurtransferase (Xanthomonas oryzae pv. oryzae (strain MAFF 311018)).